Reading from the N-terminus, the 493-residue chain is Glutamate--tRNA ligase (493 aa).

A 'HIGH' region motif is present at residues 10 to 20 (PSPTGDPHVGT). The short motif at 251–255 (KLSKR) is the 'KMSKS' region element. Lysine 254 is a binding site for ATP.

The protein belongs to the class-I aminoacyl-tRNA synthetase family. Glutamate--tRNA ligase type 1 subfamily. Monomer.

The protein localises to the cytoplasm. The catalysed reaction is tRNA(Glu) + L-glutamate + ATP = L-glutamyl-tRNA(Glu) + AMP + diphosphate. In terms of biological role, catalyzes the attachment of glutamate to tRNA(Glu) in a two-step reaction: glutamate is first activated by ATP to form Glu-AMP and then transferred to the acceptor end of tRNA(Glu). This chain is Glutamate--tRNA ligase, found in Pseudomonas putida (strain ATCC 47054 / DSM 6125 / CFBP 8728 / NCIMB 11950 / KT2440).